Here is a 209-residue protein sequence, read N- to C-terminus: GTP-binding protein RHB1 (209 aa).

Met-1 is modified (N-acetylmethionine). Residues Gly-28, Lys-29, Thr-30, Thr-31, Val-42, Tyr-45, Thr-48, Asp-132, and Ala-172 each coordinate GTP. Thr-30 lines the Mg(2+) pocket. The Effector region motif lies at 45–53 (YYPTIENEF). Position 48 (Thr-48) interacts with Mg(2+). Residue Cys-206 is modified to Cysteine methyl ester. Residue Cys-206 is the site of S-farnesyl cysteine attachment. Residues 207–209 (SIM) constitute a propeptide, removed in mature form.

It belongs to the small GTPase superfamily. Rheb family. In terms of assembly, interacts with BTN2.

The protein localises to the cell membrane. It carries out the reaction GTP + H2O = GDP + phosphate + H(+). Its function is as follows. Binds GTP and exhibits intrinsic GTPase activity. Involved in the regulation of arginine and lysine uptake. Acts through the CAN1 permease. This Saccharomyces cerevisiae (strain ATCC 204508 / S288c) (Baker's yeast) protein is GTP-binding protein RHB1 (RHB1).